Consider the following 217-residue polypeptide: Somatotropin (217 aa).

The N-terminal stretch at 1–26 is a signal peptide; it reads MATGSRTSLLLAFGLLCLPWLQEGSA. Position 44 (H44) interacts with Zn(2+). A disulfide bridge links C79 with C191. The residue at position 132 (S132) is a Phosphoserine. The residue at position 163 (Q163) is a Deamidated glutamine; by deterioration. At S176 the chain carries Phosphoserine. Residue N178 is modified to Deamidated asparagine; by deterioration. Position 200 (E200) interacts with Zn(2+). A disulfide bridge links C208 with C215.

It belongs to the somatotropin/prolactin family. As to quaternary structure, monomer, dimer, trimer, tetramer and pentamer, disulfide-linked or non-covalently associated, in homomeric and heteromeric combinations. Can also form a complex either with GHBP or with the alpha2-macroglobulin complex.

It localises to the secreted. Functionally, plays an important role in growth control. Its major role in stimulating body growth is to stimulate the liver and other tissues to secrete IGF1. It stimulates both the differentiation and proliferation of myoblasts. It also stimulates amino acid uptake and protein synthesis in muscle and other tissues. The protein is Somatotropin (GH1) of Homo sapiens (Human).